The sequence spans 234 residues: Purine nucleoside phosphorylase DeoD-type (234 aa).

An a purine D-ribonucleoside-binding site is contributed by His4. Phosphate-binding positions include Gly20, Arg24, Arg43, and 87-90 (RIGS). A purine D-ribonucleoside is bound by residues Glu162, 179-181 (EME), and 203-204 (SD). Asp204 acts as the Proton donor in catalysis.

It belongs to the PNP/UDP phosphorylase family. Homohexamer; trimer of homodimers.

The enzyme catalyses a purine D-ribonucleoside + phosphate = a purine nucleobase + alpha-D-ribose 1-phosphate. It catalyses the reaction a purine 2'-deoxy-D-ribonucleoside + phosphate = a purine nucleobase + 2-deoxy-alpha-D-ribose 1-phosphate. Functionally, catalyzes the reversible phosphorolytic breakdown of the N-glycosidic bond in the beta-(deoxy)ribonucleoside molecules, with the formation of the corresponding free purine bases and pentose-1-phosphate. The sequence is that of Purine nucleoside phosphorylase DeoD-type from Jannaschia sp. (strain CCS1).